The sequence spans 1165 residues: Disease resistance protein RPS4B (1165 aa).

In terms of domain architecture, TIR spans 12–174 (PQHQVFINFR…EIVKEVKKVL (163 aa)). Residue E86 is part of the active site. The region spanning 211 to 474 (KQRLKELEEK…FLDIACFRSQ (264 aa)) is the NB-ARC domain. The LRR 1 repeat unit spans residues 592–613 (SHCPHECLTNNKINMPDGLELP). The stretch at 614–635 (LKEVRCLHWLKFPLEELPNDFD) is one LRR 2; degenerate repeat. LRR repeat units follow at residues 636-659 (PINL…VKDT), 684-703 (NLQR…RDVN), 704-725 (LTSL…PLIP), 726-748 (ENLK…VGNL), 772-794 (LKTL…EINK), and 795-818 (SSLK…SVQY). Residues 819–836 (LCLSRNDHLIYLPAGINQ) form an LRR 9; degenerate repeat. One copy of the LRR 10 repeat lies at 837-863 (VSQLTRLDLKYCTKLTYVPELPPTLQY).

Belongs to the disease resistance TIR-NB-LRR family. As to quaternary structure, interacts with RRS1B. RPS4B-RRS1B heterodimer interacts with the bacterial effectors AvrRps4 and PopP2.

The protein resides in the nucleus. It catalyses the reaction NAD(+) + H2O = ADP-D-ribose + nicotinamide + H(+). Disease resistance (R) protein that specifically recognizes the AvrRps4 type III effector avirulence protein from P.syringae. Heterodimerization with RRS1B is required to form a functional complex to recognize AvrRps4 and to mediate the hypersensitive response. In Arabidopsis thaliana (Mouse-ear cress), this protein is Disease resistance protein RPS4B.